The following is a 476-amino-acid chain: Argininosuccinate lyase (476 aa).

Low complexity predominate over residues 1-17 (MTDTGSSDTNTDTTGTS). The interval 1–22 (MTDTGSSDTNTDTTGTSKANTM) is disordered.

Belongs to the lyase 1 family. Argininosuccinate lyase subfamily.

It localises to the cytoplasm. The catalysed reaction is 2-(N(omega)-L-arginino)succinate = fumarate + L-arginine. It functions in the pathway amino-acid biosynthesis; L-arginine biosynthesis; L-arginine from L-ornithine and carbamoyl phosphate: step 3/3. The protein is Argininosuccinate lyase of Jannaschia sp. (strain CCS1).